The primary structure comprises 549 residues: Glucose-6-phosphate isomerase (549 aa).

3 positions are modified to N6-acetyllysine: Lys-80, Lys-228, and Lys-234. The active-site Proton donor is the Glu-355. Catalysis depends on residues His-386 and Lys-514.

This sequence belongs to the GPI family.

It is found in the cytoplasm. It carries out the reaction alpha-D-glucose 6-phosphate = beta-D-fructose 6-phosphate. Its pathway is carbohydrate biosynthesis; gluconeogenesis. The protein operates within carbohydrate degradation; glycolysis; D-glyceraldehyde 3-phosphate and glycerone phosphate from D-glucose: step 2/4. Its function is as follows. Catalyzes the reversible isomerization of glucose-6-phosphate to fructose-6-phosphate. This chain is Glucose-6-phosphate isomerase, found in Escherichia coli O127:H6 (strain E2348/69 / EPEC).